The chain runs to 446 residues: Amino-acid acetyltransferase (446 aa).

Positions 299 to 438 (EQVRDAEIDD…QKLYNFQRKS (140 aa)) constitute an N-acetyltransferase domain.

It belongs to the acetyltransferase family. ArgA subfamily.

It localises to the cytoplasm. The enzyme catalyses L-glutamate + acetyl-CoA = N-acetyl-L-glutamate + CoA + H(+). Its pathway is amino-acid biosynthesis; L-arginine biosynthesis; N(2)-acetyl-L-ornithine from L-glutamate: step 1/4. This Aliivibrio fischeri (strain ATCC 700601 / ES114) (Vibrio fischeri) protein is Amino-acid acetyltransferase.